The primary structure comprises 264 residues: Thiazole synthase (264 aa).

The active-site Schiff-base intermediate with DXP is the lysine 106. Residues glycine 167, alanine 193 to glycine 194, and asparagine 215 to serine 216 contribute to the 1-deoxy-D-xylulose 5-phosphate site.

The protein belongs to the ThiG family. As to quaternary structure, homotetramer. Forms heterodimers with either ThiH or ThiS.

It is found in the cytoplasm. The enzyme catalyses [ThiS sulfur-carrier protein]-C-terminal-Gly-aminoethanethioate + 2-iminoacetate + 1-deoxy-D-xylulose 5-phosphate = [ThiS sulfur-carrier protein]-C-terminal Gly-Gly + 2-[(2R,5Z)-2-carboxy-4-methylthiazol-5(2H)-ylidene]ethyl phosphate + 2 H2O + H(+). It functions in the pathway cofactor biosynthesis; thiamine diphosphate biosynthesis. Catalyzes the rearrangement of 1-deoxy-D-xylulose 5-phosphate (DXP) to produce the thiazole phosphate moiety of thiamine. Sulfur is provided by the thiocarboxylate moiety of the carrier protein ThiS. In vitro, sulfur can be provided by H(2)S. The polypeptide is Thiazole synthase (Pseudomonas savastanoi pv. phaseolicola (strain 1448A / Race 6) (Pseudomonas syringae pv. phaseolicola (strain 1448A / Race 6))).